The sequence spans 396 residues: Cystathionine beta-lyase (396 aa).

Residue Lys-214 is modified to N6-(pyridoxal phosphate)lysine.

Belongs to the trans-sulfuration enzymes family. As to quaternary structure, homodimer. Requires pyridoxal 5'-phosphate as cofactor.

It is found in the cytoplasm. It catalyses the reaction L,L-cystathionine + H2O = L-homocysteine + pyruvate + NH4(+). The catalysed reaction is an S-substituted L-cysteine + H2O = a thiol + pyruvate + NH4(+). Its pathway is amino-acid biosynthesis; L-methionine biosynthesis via de novo pathway; L-homocysteine from L-cystathionine: step 1/1. Catalyzes the cleavage of cystathionine to homocysteine, pyruvate and ammonia during methionine biosynthesis. Also has cytotoxic activity toward osteogenic, osteosarcoma and tracheal cells, in vitro. The chemical basis for cell toxicity might be the formation and subsequent transfer of sulfane-sulfur to proteins, derived via beta-cystathionase cleavage of L-cystine. The protein is Cystathionine beta-lyase (metC) of Bordetella avium.